The sequence spans 446 residues: Solute carrier family 52, riboflavin transporter, member 2 (446 aa).

4 helical membrane passes run 14–34, 47–67, 79–99, and 104–124; these read LLVA…WVEL, LPSY…VVTL, APIQ…APLW, and VMAG…LALA. Residue asparagine 129 is glycosylated (N-linked (GlcNAc...) asparagine). The next 2 helical transmembrane spans lie at 147 to 167 and 196 to 216; these read FFLG…GQGV and FFGA…GLLL. The disordered stretch occupies residues 228–267; sequence GSGTGLRGGAPGVEEEEEEEASPLQEPPSQAAGNTPSPDP. Over residues 229-238 the composition is skewed to gly residues; that stretch reads SGTGLRGGAP. Residues 254–263 are compositionally biased toward polar residues; it reads PPSQAAGNTP. A run of 5 helical transmembrane segments spans residues 278 to 298, 313 to 333, 340 to 360, 367 to 387, and 405 to 425; these read ACLL…LPAV, LAVV…MGIL, LGGL…LAIL, VGTS…LGVF, and ALLA…VTMF.

It belongs to the riboflavin transporter family.

It is found in the cell membrane. It carries out the reaction riboflavin(in) = riboflavin(out). With respect to regulation, riboflavin transport is Na(+)-independent but moderately pH-sensitive. Activity is strongly inhibited by riboflavin analogs, such as lumiflavin. Weakly inhibited by flavin adenine dinucleotide (FAD) and flavin mononucleotide (FMN). Plasma membrane transporter mediating the uptake by cells of the water soluble vitamin B2/riboflavin that plays a key role in biochemical oxidation-reduction reactions of the carbohydrate, lipid, and amino acid metabolism. May also act as a receptor for 4-hydroxybutyrate. Functionally, (Microbial infection) In case of infection by porcine endogenous retrovirus (PERV-A), acts as a cell receptor to retroviral envelopes. The chain is Solute carrier family 52, riboflavin transporter, member 2 (SLC52A2) from Sus scrofa (Pig).